The following is a 1212-amino-acid chain: Peregrin (1212 aa).

The C2H2-type zinc-finger motif lies at 21–47 (YECPVETCRKVYKSYSGIEYHLYHYDH). 2 disordered regions span residues 43 to 87 (YHYD…SPGR) and 118 to 176 (VVSE…PKLP). Residues 58-67 (LRKHKKKGRQ) are compositionally biased toward basic residues. The tract at residues 59-221 (RKHKKKGRQS…VEYDMDEEDY (163 aa)) is interaction with KAT6A and KAT6B. Over residues 74–85 (QSPSPSEVSQSP) the composition is skewed to low complexity. The span at 119 to 130 (VSEDEEAPEEAP) shows a compositional bias: acidic residues. The residue at position 120 (Ser-120) is a Phosphoserine. Lys-147 is modified (N6-acetyllysine). The span at 148–166 (SGKHKNKEKRKDSNHHHHS) shows a compositional bias: basic residues. Ser-237 is modified (phosphoserine). Residues 272 to 322 (DAVCCICNDGECQNSNVILFCDMCNLAVHQECYGVPYIPEGQWLCRRCLQS) form a PHD-type 1 zinc finger. A C2HC pre-PHD-type zinc finger spans residues 326-359 (AVDCALCPNKGGAFKQTDDGRWAHVVCALWIPEV). A PHD-type 2 zinc finger spans residues 383-447 (LTCYICKQRG…RKTAYCDIHT (65 aa)). The interval 447–489 (TPPGSARRLPALSHSEGEEEEDEEEDEGKSWSSEKVKKAKAKS) is disordered. Phosphoserine occurs at positions 459 and 461. Acidic residues predominate over residues 463-473 (GEEEEDEEEDE). Residues 500–819 (LAEKRAAAPV…IKKEMTALRR (320 aa)) form an interaction with MEAF6 and ING5 region. The required for RUNX1 and RUNX2 transcriptional activation stretch occupies residues 542–1077 (YWTLKRQSRN…RGAGWLSEDE (536 aa)). Residue Lys-579 is modified to N6-acetyllysine. The Bromo domain occupies 627-731 (MQLTPFLILL…EQGGAVLRQA (105 aa)). Residues 817–1060 (LRRKLAHQRE…VGTGRGVGHS (244 aa)) are disordered. Positions 823–836 (HQRETGRDGPERHG) are enriched in basic and acidic residues. Thr-856 is modified (phosphothreonine). The span at 856–869 (TDSAAEESSSQETS) shows a compositional bias: low complexity. A phosphoserine mark is found at Ser-858, Ser-915, Ser-920, and Ser-924. Low complexity predominate over residues 993–1019 (PRSSSDSESSSSSSSSAASDRTSTTPS). Position 1074 is a phosphoserine (Ser-1074). The 84-residue stretch at 1083–1166 (ALDLVWAKCR…RTKLVPLGVN (84 aa)) folds into the PWWP domain. Ser-1185 carries the post-translational modification Phosphoserine.

As to quaternary structure, component of some HBO1 complex composed of KAT7/HBO1, MEAF6, ING5, and BRPF1. Component of the MOZ/MORF complex composed at least of ING5, KAT6A, KAT6B, MEAF6 and one of BRPF1, BRD1/BRPF2 and BRPF3. Interacts (via PHD-type zinc finger domains) with unmethylated histone H3 at 'Lys-4' (H3K4me0). Interacts with trimethylated 'Lys-36' of histone H3 (H3K36me3). Interacts with ING5; interaction directs BRPF1 to H4K4me3-enriched chromatin at the 5' of active genes. Interacts with KAT7. In terms of processing, acetylated by KAT6A. Expressed at low level in most tissues, with high expression in the testis and specific regions of the brain.

Its subcellular location is the nucleus. It is found in the chromosome. The protein resides in the cytoplasm. In terms of biological role, scaffold subunit of various histone acetyltransferase (HAT) complexes, such as the MOZ/MORF and HBO1 complexes, which have a histone H3 acetyltransferase activity. Plays a key role in HBO1 complex by directing KAT7/HBO1 specificity towards histone H3 'Lys-14' acetylation (H3K14ac). Some HAT complexes preferentially mediate histone H3 'Lys-23' (H3K23ac) acetylation. Positively regulates the transcription of RUNX1 and RUNX2. The polypeptide is Peregrin (Mus musculus (Mouse)).